Reading from the N-terminus, the 277-residue chain is (-)-trans-carveol dehydrogenase (277 aa).

10 to 32 (LITGAARGQGRSHAIKLAEEGAD) contributes to the NAD(+) binding site. Residue Ser156 coordinates substrate. Catalysis depends on Tyr169, which acts as the Proton acceptor.

The protein belongs to the short-chain dehydrogenases/reductases (SDR) family. As to quaternary structure, homotetramer.

It carries out the reaction (1S,5R)-carveol + NAD(+) = (R)-carvone + NADH + H(+). The enzyme catalyses (1S,5S)-carveol + NAD(+) = (S)-carvone + NADH + H(+). Its pathway is terpene metabolism; limonene degradation. Its activity is regulated as follows. Competitively inhibited by the product (S)- or (R)-carvone. Catalyzes the oxidation of carveol to carvone, with a strong stereoselectivity since it efficiently converts only the (6S)-stereoisomers, of which (-)-(4R,6S)-trans-carveol is the better substrate. Displays a broad substrate specificity with a preference for substituted cyclohexanols, and does not catalyze the oxidation of primary or short chain aliphatic secondary alcohols. Is also able, albeit more slowly, to oxidize limonene-1,2-diol into 1-hydroxy-2-oxolimonene. This chain is (-)-trans-carveol dehydrogenase (limC), found in Rhodococcus erythropolis (Arthrobacter picolinophilus).